The following is a 417-amino-acid chain: Gamma-glutamyl phosphate reductase (417 aa).

It belongs to the gamma-glutamyl phosphate reductase family.

The protein localises to the cytoplasm. The enzyme catalyses L-glutamate 5-semialdehyde + phosphate + NADP(+) = L-glutamyl 5-phosphate + NADPH + H(+). It functions in the pathway amino-acid biosynthesis; L-proline biosynthesis; L-glutamate 5-semialdehyde from L-glutamate: step 2/2. Its function is as follows. Catalyzes the NADPH-dependent reduction of L-glutamate 5-phosphate into L-glutamate 5-semialdehyde and phosphate. The product spontaneously undergoes cyclization to form 1-pyrroline-5-carboxylate. The sequence is that of Gamma-glutamyl phosphate reductase from Escherichia coli O45:K1 (strain S88 / ExPEC).